Consider the following 122-residue polypeptide: Large ribosomal subunit protein uL14c (122 aa).

This sequence belongs to the universal ribosomal protein uL14 family. In terms of assembly, part of the 50S ribosomal subunit.

The protein localises to the plastid. The protein resides in the chloroplast. Binds to 23S rRNA. The polypeptide is Large ribosomal subunit protein uL14c (Chlorokybus atmophyticus (Soil alga)).